We begin with the raw amino-acid sequence, 200 residues long: Kunitz type trypsin inhibitor 111 (200 aa).

A signal peptide spans 1 to 24; the sequence is MSTISFTIFILANVWLLVVTTSIA. 3 disulfide bridges follow: Cys62–Cys108, Cys160–Cys172, and Cys165–Cys168.

It belongs to the protease inhibitor I3 (leguminous Kunitz-type inhibitor) family. In terms of assembly, interacts with SCP1.

The protein resides in the secreted. It localises to the extracellular space. The protein localises to the apoplast. In Medicago truncatula (Barrel medic), this protein is Kunitz type trypsin inhibitor 111 (KPI111).